Reading from the N-terminus, the 1000-residue chain is C2 domain-containing protein 5 (1000 aa).

One can recognise a C2 domain in the interval 1–109; the sequence is MPGKLKVKIV…EAATVISGWF (109 aa). Residues Asp-19, Asp-26, Asp-76, Asp-78, Ser-81, and Asp-84 each contribute to the Ca(2+) site. A Phosphoserine; by PKB/AKT2 modification is found at Ser-197. Residues Ser-200 and Ser-260 each carry the phosphoserine modification. A disordered region spans residues 265-330; it reads MKEIPFNEDP…SGSAGKEGGP (66 aa). The segment covering 274 to 289 has biased composition (polar residues); that stretch reads PNPNTHSSGPSTPLKN. Over residues 290–318 the composition is skewed to low complexity; that stretch reads QTYSFSPSKSYSRQSSSSDTDLSLTPKTG. Phosphoserine occurs at positions 293, 295, 304, 305, and 306. A Phosphothreonine modification is found at Thr-317. Over residues 319 to 328 the composition is skewed to gly residues; the sequence is MGSGSAGKEG. Ser-323 bears the Phosphoserine mark. The residue at position 601 (Thr-601) is a Phosphothreonine. Residues 639 to 669 form a disordered region; that stretch reads EIIGSPIPEPRQRSRLLRSQSESSDEVTELD. 5 positions are modified to phosphoserine: Ser-643, Ser-657, Ser-659, Ser-661, and Ser-662. Thr-666 carries the phosphothreonine modification. A Phosphoserine modification is found at Ser-671. Thr-807 bears the Phosphothreonine mark. 2 positions are modified to phosphoserine: Ser-817 and Ser-852.

It depends on Ca(2+) as a cofactor. In terms of processing, phosphorylated on Ser-197 by active myristoylated kinase AKT2; insulin-stimulated phosphorylation by AKT2 regulates SLC2A4/GLUT4 translocation into the plasma membrane.

It is found in the cytoplasmic vesicle membrane. The protein localises to the cytoplasm. The protein resides in the cell cortex. It localises to the cell membrane. Its subcellular location is the cell projection. It is found in the ruffle. Functionally, required for insulin-stimulated glucose transport and glucose transporter SLC2A4/GLUT4 translocation from intracellular glucose storage vesicle (GSV) to the plasma membrane (PM) in adipocytes. Binds phospholipid membranes in a calcium-dependent manner and is necessary for the optimal membrane fusion between SLC2A4/GLUT4 GSV and the PM. In Homo sapiens (Human), this protein is C2 domain-containing protein 5 (C2CD5).